The following is a 154-amino-acid chain: Myoglobin (154 aa).

The Globin domain maps to 2 to 148 (GLSDGEWQLV…FRHDMAAKYK (147 aa)). Ser-4 is modified (phosphoserine). His-65 serves as a coordination point for nitrite. His-65 lines the O2 pocket. Thr-68 carries the post-translational modification Phosphothreonine. His-94 is a heme b binding site.

This sequence belongs to the globin family. Monomeric.

It localises to the cytoplasm. The protein resides in the sarcoplasm. The enzyme catalyses Fe(III)-heme b-[protein] + nitric oxide + H2O = Fe(II)-heme b-[protein] + nitrite + 2 H(+). The catalysed reaction is H2O2 + AH2 = A + 2 H2O. Monomeric heme protein which primary function is to store oxygen and facilitate its diffusion within muscle tissues. Reversibly binds oxygen through a pentacoordinated heme iron and enables its timely and efficient release as needed during periods of heightened demand. Depending on the oxidative conditions of tissues and cells, and in addition to its ability to bind oxygen, it also has a nitrite reductase activity whereby it regulates the production of bioactive nitric oxide. Under stress conditions, like hypoxia and anoxia, it also protects cells against reactive oxygen species thanks to its pseudoperoxidase activity. In Osphranter rufus (Red kangaroo), this protein is Myoglobin (MB).